Here is a 104-residue protein sequence, read N- to C-terminus: Protein RnfH (104 aa).

It belongs to the UPF0125 (RnfH) family.

The protein is Protein RnfH of Pseudomonas fluorescens (strain ATCC BAA-477 / NRRL B-23932 / Pf-5).